A 425-amino-acid polypeptide reads, in one-letter code: G protein-activated inward rectifier potassium channel 2 (425 aa).

At 1–91 (MTMAKLTESM…IFTTLVDLKW (91 aa)) the chain is on the cytoplasmic side. Phosphoserine occurs at positions 18 and 25. Residues 92–116 (RFNLLIFVMVYTVTWLFFGMIWWLI) form a helical membrane-spanning segment. The Extracellular portion of the chain corresponds to 117–140 (AYIRGDMDHIEDPSWTPCVTNLNG). Positions 141 to 152 (FVSAFLFSIETE) form an intramembrane region, helical; Pore-forming. An intramembrane region (pore-forming) is located at residues 153–159 (TTIGYGY). The short motif at 154–159 (TIGYGY) is the Selectivity filter element. At 160–168 (RVITDKCPE) the chain is on the extracellular side. A helical transmembrane segment spans residues 169-190 (GIILLLIQSVLGSIVNAFMVGC). Residues 191-425 (MFVKISQPKK…VANLENESKV (235 aa)) lie on the Cytoplasmic side of the membrane. A disordered region spans residues 392–425 (NQHAELETEEEEKNPEELTERNGDVANLENESKV). A PDZ-binding motif is present at residues 422–425 (ESKV).

This sequence belongs to the inward rectifier-type potassium channel (TC 1.A.2.1) family. KCNJ6 subfamily. Associates with KCNJ3/GIRK1to form a G-protein-activated heteromultimer pore-forming unit. Associates with KCNJ5/GRIK4 to form a G-protein-activated heteromultimer pore-forming unit. The resulting inward current is much larger. Interacts (via PDZ-binding motif) with SNX27 (via PDZ domain); the interaction is required when endocytosed to prevent degradation in lysosomes and promote recycling to the plasma membrane. As to quaternary structure, associates with KCNJ3/GRIK1 to form a G-protein-activated heteromultimer pore-forming unit. In terms of assembly, associates with KCNJ3/GRIK1 to form a G-protein-activated heteromultimer pore-forming unit. The resulting inward current is much larger. Expressed in the brain.

It localises to the membrane. The catalysed reaction is K(+)(in) = K(+)(out). With respect to regulation, activated by phosphatidylinositol 4,5 biphosphate (PtdIns(4,5)P2). Its function is as follows. Inward rectifier potassium channels are characterized by a greater tendency to allow potassium to flow into the cell rather than out of it. Their voltage dependence is regulated by the concentration of extracellular potassium; as external potassium is raised, the voltage range of the channel opening shifts to more positive voltages. The inward rectification is mainly due to the blockage of outward current by internal magnesium. This potassium channel is controlled by G proteins. Forms a functional channel in association with KCNJ3/GIRK1. Inward rectifier potassium channels are characterized by a greater tendency to allow potassium to flow into the cell rather than out of it. Their voltage dependence is regulated by the concentration of extracellular potassium; as external potassium is raised, the voltage range of the channel opening shifts to more positive voltages. The inward rectification is mainly due to the blockage of outward current by internal magnesium. This potassium channel is controlled by G proteins. In Mus musculus (Mouse), this protein is G protein-activated inward rectifier potassium channel 2 (Kcnj6).